The sequence spans 500 residues: NAD(P)H-quinone oxidoreductase subunit 2 A, chloroplastic (500 aa).

A run of 13 helical transmembrane segments spans residues 14-34 (LLLF…GLIL), 47-67 (IPWF…ALLF), 89-109 (IFQF…VEYI), 114-134 (MAIT…MFLC), 139-159 (FITI…LSGY), 173-193 (YLLM…WLYG), 217-237 (PGIS…LSPA), 285-305 (WHLL…LIAI), 313-333 (MLAY…IVGD), 344-364 (YMLF…LFGL), 385-405 (ALSL…AGFF), 408-428 (LHLF…IGLL), and 474-494 (MIVC…IIAI).

It belongs to the complex I subunit 2 family. NDH is composed of at least 16 different subunits, 5 of which are encoded in the nucleus.

It localises to the plastid. The protein localises to the chloroplast thylakoid membrane. The enzyme catalyses a plastoquinone + NADH + (n+1) H(+)(in) = a plastoquinol + NAD(+) + n H(+)(out). It carries out the reaction a plastoquinone + NADPH + (n+1) H(+)(in) = a plastoquinol + NADP(+) + n H(+)(out). In terms of biological role, NDH shuttles electrons from NAD(P)H:plastoquinone, via FMN and iron-sulfur (Fe-S) centers, to quinones in the photosynthetic chain and possibly in a chloroplast respiratory chain. The immediate electron acceptor for the enzyme in this species is believed to be plastoquinone. Couples the redox reaction to proton translocation, and thus conserves the redox energy in a proton gradient. This chain is NAD(P)H-quinone oxidoreductase subunit 2 A, chloroplastic, found in Pelargonium hortorum (Common geranium).